We begin with the raw amino-acid sequence, 186 residues long: Peptidyl-tRNA hydrolase (186 aa).

Tyr-15 provides a ligand contact to tRNA. His-20 acts as the Proton acceptor in catalysis. The tRNA site is built by Tyr-64, Asn-66, and Asn-112.

The protein belongs to the PTH family. As to quaternary structure, monomer.

The protein resides in the cytoplasm. It carries out the reaction an N-acyl-L-alpha-aminoacyl-tRNA + H2O = an N-acyl-L-amino acid + a tRNA + H(+). Its function is as follows. Hydrolyzes ribosome-free peptidyl-tRNAs (with 1 or more amino acids incorporated), which drop off the ribosome during protein synthesis, or as a result of ribosome stalling. In terms of biological role, catalyzes the release of premature peptidyl moieties from peptidyl-tRNA molecules trapped in stalled 50S ribosomal subunits, and thus maintains levels of free tRNAs and 50S ribosomes. The chain is Peptidyl-tRNA hydrolase from Azobacteroides pseudotrichonymphae genomovar. CFP2.